The chain runs to 415 residues: Serine hydroxymethyltransferase (415 aa).

Residues Leu121 and 125–127 (GHL) each bind (6S)-5,6,7,8-tetrahydrofolate. Residue Lys230 is modified to N6-(pyridoxal phosphate)lysine. 355–357 (SPF) is a binding site for (6S)-5,6,7,8-tetrahydrofolate.

Belongs to the SHMT family. As to quaternary structure, homodimer. Pyridoxal 5'-phosphate is required as a cofactor.

The protein resides in the cytoplasm. It carries out the reaction (6R)-5,10-methylene-5,6,7,8-tetrahydrofolate + glycine + H2O = (6S)-5,6,7,8-tetrahydrofolate + L-serine. It functions in the pathway one-carbon metabolism; tetrahydrofolate interconversion. It participates in amino-acid biosynthesis; glycine biosynthesis; glycine from L-serine: step 1/1. In terms of biological role, catalyzes the reversible interconversion of serine and glycine with tetrahydrofolate (THF) serving as the one-carbon carrier. This reaction serves as the major source of one-carbon groups required for the biosynthesis of purines, thymidylate, methionine, and other important biomolecules. Also exhibits THF-independent aldolase activity toward beta-hydroxyamino acids, producing glycine and aldehydes, via a retro-aldol mechanism. This Lactococcus lactis subsp. cremoris (strain SK11) protein is Serine hydroxymethyltransferase.